The primary structure comprises 282 residues: HTH-type transcriptional activator RhaR (282 aa).

The region spanning 179–277 (DKLITRLAAS…GMTPSQWRHL (99 aa)) is the HTH araC/xylS-type domain. 2 DNA-binding regions (H-T-H motif) span residues 196–217 (DKFCDEASCSERVLRQQFRQQT) and 244–267 (ISDISTECGFEDSNYFSVVFTRET).

In terms of assembly, binds DNA as a dimer.

Its subcellular location is the cytoplasm. Functionally, activates expression of the rhaSR operon in response to L-rhamnose. This chain is HTH-type transcriptional activator RhaR, found in Escherichia coli O139:H28 (strain E24377A / ETEC).